Reading from the N-terminus, the 710-residue chain is Prolyl endopeptidase (710 aa).

Residue Met-1 is modified to N-acetylmethionine. Lys-157 is modified (N6-acetyllysine). Active-site charge relay system residues include Ser-554, Asp-641, and His-680.

This sequence belongs to the peptidase S9A family. As to quaternary structure, monomer. Post-translationally, the N-terminus is blocked.

It localises to the cytoplasm. The catalysed reaction is Hydrolysis of Pro-|-Xaa &gt;&gt; Ala-|-Xaa in oligopeptides.. Functionally, cleaves peptide bonds on the C-terminal side of prolyl residues within peptides that are up to approximately 30 amino acids long. In Homo sapiens (Human), this protein is Prolyl endopeptidase (PREP).